The following is a 67-amino-acid chain: Neurotoxin Cex10 (67 aa).

The region spanning 1-65 (KDGYLVEVTG…TWPLPNKSCG (65 aa)) is the LCN-type CS-alpha/beta domain. 4 disulfide bridges follow: Cys-11/Cys-64, Cys-15/Cys-40, Cys-24/Cys-45, and Cys-28/Cys-47. A Cysteine amide modification is found at Cys-64. The propeptide occupies 65 to 67 (GKK).

The protein belongs to the long (4 C-C) scorpion toxin superfamily. Sodium channel inhibitor family. Beta subfamily. As to expression, expressed by the venom gland.

It localises to the secreted. Its function is as follows. Beta toxins bind voltage-independently at site-4 of sodium channels (Nav) and shift the voltage of activation toward more negative potentials thereby affecting sodium channel activation and promoting spontaneous and repetitive firing. The polypeptide is Neurotoxin Cex10 (Centruroides exilicauda (Bark scorpion)).